The chain runs to 307 residues: Capsid assembly scaffolding protein (307 aa).

Acidic residues-rich tracts occupy residues 45–54 and 83–101; these read IELASDEVET and EPTDVDTGEEGVEGTEGSE. Positions 45 to 105 are disordered; the sequence is IELASDEVET…GTEGSEEFTP (61 aa).

Belongs to the T7likevirus capsid assembly scaffolding protein family.

Functionally, scaffolding protein involved in the icosahedric procapsid assembly. Coassembles with the capsid proteins to form the procapsid, in which the scaffolding protein is found within the external shell of icosahedrally arranged capsid protein subunits. In a subsequent step the scaffolding protein molecules are released from the procapsid. Facilitates assembly by binding to gp10 hexamers but not the pentamers and locking them into a morphogenically correct conformation. The sequence is that of Capsid assembly scaffolding protein from Escherichia coli (Bacteriophage T7).